Consider the following 44-residue polypeptide: Non-structural protein 7b (44 aa).

Residues 9 to 29 form a helical membrane-spanning segment; sequence FYLCFLAFLLFLVLIMLLIFW.

The protein localises to the host membrane. In Bat coronavirus HKU3 (BtCoV), this protein is Non-structural protein 7b.